Here is a 690-residue protein sequence, read N- to C-terminus: Capsid protein VP1 (690 aa).

Residues Met-1 to Gly-80 are disordered. The segment covering Thr-40–Asp-53 has biased composition (acidic residues). Residues Ala-64 to Gly-80 are compositionally biased toward gly residues.

Belongs to the parvoviridae capsid protein family.

The protein resides in the virion. Its subcellular location is the host nucleus. In terms of biological role, capsid protein self-assembles to form an icosahedral capsid with a T=1 symmetry, about 25 nm in diameter, and consisting of 60 copies of two size variants of the capsid proteins, VP1 (10% abundance) and VP2 (90% abundance), which differ by the presence of an N-terminal extension in the minor protein VP1. Capsid proteins are responsible for the attachment to host cell receptors. This attachment induces virion internalization predominantly through clathrin-dependent endocytosis. VP1 binds DNA and may therefore play a role in viral DNA encapsidation. This chain is Capsid protein VP1, found in Aleutian mink disease parvovirus (strain G) (ADV).